The sequence spans 829 residues: Probable receptor-like protein kinase At5g59700 (829 aa).

A signal peptide spans 1-24 (MGGEKFGFLIWILSIPCLIFLCYG). Residues 25 to 406 (YVPVDNYLIN…SSTTKKNVGM (382 aa)) are Extracellular-facing. 4 N-linked (GlcNAc...) asparagine glycosylation sites follow: N40, N216, N279, and N380. Residues 407 to 427 (IIGLTIGSLLALVVLGGFFVL) traverse the membrane as a helical segment. Residues 428 to 829 (YKKRGRDQDG…FSQLIKSEGR (402 aa)) lie on the Cytoplasmic side of the membrane. One can recognise a Protein kinase domain in the interval 482–755 (FDENRAIGVG…GDVLWNLEYA (274 aa)). ATP is bound by residues 488-496 (IGVGGFGKV) and K510. D606 functions as the Proton acceptor in the catalytic mechanism.

This sequence belongs to the protein kinase superfamily. Ser/Thr protein kinase family.

It is found in the cell membrane. The polypeptide is Probable receptor-like protein kinase At5g59700 (Arabidopsis thaliana (Mouse-ear cress)).